We begin with the raw amino-acid sequence, 82 residues long: Putative membrane protein insertion efficiency factor (82 aa).

This sequence belongs to the UPF0161 family.

Its subcellular location is the cell inner membrane. In terms of biological role, could be involved in insertion of integral membrane proteins into the membrane. This is Putative membrane protein insertion efficiency factor from Rickettsia felis (strain ATCC VR-1525 / URRWXCal2) (Rickettsia azadi).